Consider the following 1178-residue polypeptide: DNA-directed RNA polymerase I subunit 2 (1178 aa).

The C4-type zinc finger occupies 1097–1137; that stretch reads CSLCGSLLTSSVVNVQQKKLIQEIGKLPPGRTPKKVTCYSC.

It belongs to the RNA polymerase beta chain family. Component of the RNA polymerase I (Pol I) complex consisting of at least 13 subunits.

It localises to the nucleus. It catalyses the reaction RNA(n) + a ribonucleoside 5'-triphosphate = RNA(n+1) + diphosphate. Its function is as follows. DNA-dependent RNA polymerase catalyzes the transcription of DNA into RNA using the four ribonucleoside triphosphates as substrates. Second largest core component of RNA polymerase I which synthesizes ribosomal RNA precursors. Proposed to contribute to the polymerase catalytic activity and forms the polymerase active center together with the largest subunit. Pol I is composed of mobile elements and NRPA2 is part of the core element with the central large cleft and probably a clamp element that moves to open and close the cleft. Functionally, essential for the completion of the three rounds of mitosis in female megaspores required for the development of mature gametophytes. In Arabidopsis thaliana (Mouse-ear cress), this protein is DNA-directed RNA polymerase I subunit 2.